A 906-amino-acid chain; its full sequence is Protein translocase subunit SecA (906 aa).

Residues Q87, 105–109 (GEGKT), and D512 contribute to the ATP site. The segment at 879-906 (REGEKIGRNDPCPCGSGQKYKQCHGKLS) is disordered. Zn(2+) contacts are provided by C890, C892, C901, and H902.

Belongs to the SecA family. In terms of assembly, monomer and homodimer. Part of the essential Sec protein translocation apparatus which comprises SecA, SecYEG and auxiliary proteins SecDF-YajC and YidC. The cofactor is Zn(2+).

It localises to the cell inner membrane. The protein resides in the cytoplasm. It carries out the reaction ATP + H2O + cellular proteinSide 1 = ADP + phosphate + cellular proteinSide 2.. Part of the Sec protein translocase complex. Interacts with the SecYEG preprotein conducting channel. Has a central role in coupling the hydrolysis of ATP to the transfer of proteins into and across the cell membrane, serving both as a receptor for the preprotein-SecB complex and as an ATP-driven molecular motor driving the stepwise translocation of polypeptide chains across the membrane. This is Protein translocase subunit SecA from Shewanella frigidimarina (strain NCIMB 400).